The primary structure comprises 128 residues: Holo-[acyl-carrier-protein] synthase (128 aa).

Positions 8 and 60 each coordinate Mg(2+).

Belongs to the P-Pant transferase superfamily. AcpS family. The cofactor is Mg(2+).

It localises to the cytoplasm. The catalysed reaction is apo-[ACP] + CoA = holo-[ACP] + adenosine 3',5'-bisphosphate + H(+). Transfers the 4'-phosphopantetheine moiety from coenzyme A to a Ser of acyl-carrier-protein. The protein is Holo-[acyl-carrier-protein] synthase of Anaeromyxobacter dehalogenans (strain 2CP-C).